Here is a 206-residue protein sequence, read N- to C-terminus: ATP phosphoribosyltransferase (206 aa).

The protein belongs to the ATP phosphoribosyltransferase family. Short subfamily. Heteromultimer composed of HisG and HisZ subunits.

Its subcellular location is the cytoplasm. It catalyses the reaction 1-(5-phospho-beta-D-ribosyl)-ATP + diphosphate = 5-phospho-alpha-D-ribose 1-diphosphate + ATP. It functions in the pathway amino-acid biosynthesis; L-histidine biosynthesis; L-histidine from 5-phospho-alpha-D-ribose 1-diphosphate: step 1/9. In terms of biological role, catalyzes the condensation of ATP and 5-phosphoribose 1-diphosphate to form N'-(5'-phosphoribosyl)-ATP (PR-ATP). Has a crucial role in the pathway because the rate of histidine biosynthesis seems to be controlled primarily by regulation of HisG enzymatic activity. This Leptospira interrogans serogroup Icterohaemorrhagiae serovar copenhageni (strain Fiocruz L1-130) protein is ATP phosphoribosyltransferase.